Reading from the N-terminus, the 1620-residue chain is Probable serine/threonine-protein kinase gdt4 (1620 aa).

A signal peptide spans 1-19; the sequence is MKLEQRIFFLICLVINSFS. The Extracellular segment spans residues 20–891; sequence NCSLLVAPDG…EVIGINEQLN (872 aa). Residues 892–912 traverse the membrane as a helical segment; that stretch reads ILAIVLPITISLFAAASILAG. Topologically, residues 913–1620 are cytoplasmic; it reads YLVIKKYKKP…AKRNKKNQNQ (708 aa). Positions 1349–1604 constitute a Protein kinase domain; sequence IVLEKYLSEG…TLIDLLEKLL (256 aa). ATP-binding positions include 1355–1363 and lysine 1376; that span reads LSEGSFGVV. The active-site Proton acceptor is the aspartate 1466.

In the N-terminal section; belongs to the GDT family. The protein in the C-terminal section; belongs to the protein kinase superfamily. TKL Ser/Thr protein kinase family.

It localises to the membrane. The enzyme catalyses L-seryl-[protein] + ATP = O-phospho-L-seryl-[protein] + ADP + H(+). It carries out the reaction L-threonyl-[protein] + ATP = O-phospho-L-threonyl-[protein] + ADP + H(+). This is Probable serine/threonine-protein kinase gdt4 (gdt4) from Dictyostelium discoideum (Social amoeba).